A 258-amino-acid polypeptide reads, in one-letter code: Sugar fermentation stimulation protein homolog (258 aa).

This sequence belongs to the SfsA family.

The chain is Sugar fermentation stimulation protein homolog from Prochlorococcus marinus (strain NATL2A).